A 512-amino-acid chain; its full sequence is 2-isopropylmalate synthase (512 aa).

The 264-residue stretch at 5 to 268 (LIIFDTTLRD…DIGIDTQQIL (264 aa)) folds into the Pyruvate carboxyltransferase domain. Residues aspartate 14, histidine 202, histidine 204, and asparagine 239 each coordinate Mn(2+). Residues 394–512 (GFVSLSQHSE…SKADRVAAQG (119 aa)) are regulatory domain.

It belongs to the alpha-IPM synthase/homocitrate synthase family. LeuA type 1 subfamily. In terms of assembly, homodimer. Mn(2+) is required as a cofactor.

The protein resides in the cytoplasm. It catalyses the reaction 3-methyl-2-oxobutanoate + acetyl-CoA + H2O = (2S)-2-isopropylmalate + CoA + H(+). Its pathway is amino-acid biosynthesis; L-leucine biosynthesis; L-leucine from 3-methyl-2-oxobutanoate: step 1/4. Its function is as follows. Catalyzes the condensation of the acetyl group of acetyl-CoA with 3-methyl-2-oxobutanoate (2-ketoisovalerate) to form 3-carboxy-3-hydroxy-4-methylpentanoate (2-isopropylmalate). In Polaromonas naphthalenivorans (strain CJ2), this protein is 2-isopropylmalate synthase.